The primary structure comprises 32 residues: Secreted proteinase (32 aa).

Residues 1-32 (DTANDPKYGSQYAPQKVNADVDQGVXXXHPEL) are disordered. The active-site Charge relay system is Asp22.

It belongs to the peptidase S8 family.

The protein resides in the secreted. The sequence is that of Secreted proteinase from Haloferax mediterranei (Halobacterium mediterranei).